Here is a 143-residue protein sequence, read N- to C-terminus: Transcriptional regulator MraZ (143 aa).

SpoVT-AbrB domains lie at 5-47 (EYEH…TLEE) and 76-119 (AVEV…DRAS).

Belongs to the MraZ family. As to quaternary structure, forms oligomers.

The protein localises to the cytoplasm. It is found in the nucleoid. The polypeptide is Transcriptional regulator MraZ (Staphylococcus carnosus (strain TM300)).